A 433-amino-acid chain; its full sequence is MLNFISKPVGCLKGEITVPGDKSISHRSIIFGAIAIGTSVIDGFLDGEDCIATLKAFQSMGVRIEGPDKQRVIIHGVGKYGLKQPQNIIDCGNSGTSMRLLAGLLAAQQFDSQLTGDESLLKRPMLRISRPLSQMGADVTTQDGKPPIVIKGGKKLNGIHYVMPEASAQVKSCLLLAGMYAEGQTKITENAVSRDHTERMLRTFSYPVQIQDGAIIIDCNGECHGTRLNIPGDISSAAFFIVAASITPGSDVLIRNVGINPTRTGIIHILTEMGADIRVLNQRAYGEEPVADLHIRYSQLKGIDIPASMVPLAIDEFPVIFIAAACAQGKTTLHGAKELRLKESDRIGAMVDGLNQLGVHAEGFDDGILIEGGSIQGGEVNSRGDHRIAMSFAIAGAVASAPVTIKNCANVATSFPSFVTTANMLHFQIEEYS.

Residues lysine 22, serine 23, and arginine 27 each contribute to the 3-phosphoshikimate site. Phosphoenolpyruvate is bound at residue lysine 22. Phosphoenolpyruvate-binding residues include glycine 95 and arginine 123. 3-phosphoshikimate is bound by residues serine 167, glutamine 169, aspartate 315, and lysine 342. A phosphoenolpyruvate-binding site is contributed by glutamine 169. Aspartate 315 (proton acceptor) is an active-site residue. Residues arginine 346 and arginine 387 each coordinate phosphoenolpyruvate.

It belongs to the EPSP synthase family. In terms of assembly, monomer.

It localises to the cytoplasm. The enzyme catalyses 3-phosphoshikimate + phosphoenolpyruvate = 5-O-(1-carboxyvinyl)-3-phosphoshikimate + phosphate. It functions in the pathway metabolic intermediate biosynthesis; chorismate biosynthesis; chorismate from D-erythrose 4-phosphate and phosphoenolpyruvate: step 6/7. Catalyzes the transfer of the enolpyruvyl moiety of phosphoenolpyruvate (PEP) to the 5-hydroxyl of shikimate-3-phosphate (S3P) to produce enolpyruvyl shikimate-3-phosphate and inorganic phosphate. The protein is 3-phosphoshikimate 1-carboxyvinyltransferase of Legionella pneumophila subsp. pneumophila (strain Philadelphia 1 / ATCC 33152 / DSM 7513).